The following is a 1002-amino-acid chain: Mannan endo-1,4-beta-mannosidase (1002 aa).

A signal peptide spans 1 to 28; it reads MKTTVTKLLATVAAASTIFGMSTLPAFA. Positions 49-396 constitute a GH26 domain; it reads AETRALFDKL…ADSNKNLMAS (348 aa). His144 contacts substrate. Glu205 functions as the Proton donor in the catalytic mechanism. 2 residues coordinate substrate: Trp210 and Tyr278. Glu316 (nucleophile) is an active-site residue. Lys384 contacts substrate. CBM11 domains are found at residues 523-703 and 717-897; these read VDNV…GKRD and AKAQ…NEQT. Disordered stretches follow at residues 702–722 and 888–969; these read RDAYAPNTNPTPGNTAKAQSV and PAEN…LSRT. Positions 707–719 are enriched in polar residues; that stretch reads PNTNPTPGNTAKA. Basic and acidic residues-rich tracts occupy residues 897–913 and 952–966; these read TPKDESKTEVKADKEQE and PDTKEPADNTGKDGL. Positions 966–970 match the LPXTG sorting signal motif; the sequence is LSRTG. Thr969 is subject to Pentaglycyl murein peptidoglycan amidated threonine. The propeptide at 970–1002 is removed by sortase; it reads GSNIISAIAAVAVLLLGGCAVLIARKRKGGDIE.

This sequence belongs to the glycosyl hydrolase 26 family. Homodimer.

It is found in the secreted. Its subcellular location is the cell wall. It carries out the reaction Random hydrolysis of (1-&gt;4)-beta-D-mannosidic linkages in mannans, galactomannans and glucomannans.. Functionally, beta-mannanase likely involved in the utilization of carbohydrates in the human gut. Catalyzes the hydrolysis of different beta-1,4-linked mannans, such as ivory nut mannan, konjac glucomannan, as well as carob and guar gum galactomannans, to a mixture of oligosaccharides. The dominant product from ivory nut mannan is found to be mannotriose; mannobiose and mannotetraose are produced to a lesser extent. Does not hydrolyze mannobiose, and hydrolyzes mannotriose at a significantly lower rate than the longer oligosaccharides. The chain is Mannan endo-1,4-beta-mannosidase from Bifidobacterium adolescentis (strain ATCC 15703 / DSM 20083 / NCTC 11814 / E194a).